The following is a 126-amino-acid chain: Prefoldin subunit beta (126 aa).

Belongs to the prefoldin subunit beta family. As to quaternary structure, heterohexamer of two alpha and four beta subunits.

It is found in the cytoplasm. Molecular chaperone capable of stabilizing a range of proteins. Seems to fulfill an ATP-independent, HSP70-like function in archaeal de novo protein folding. This Methanocella arvoryzae (strain DSM 22066 / NBRC 105507 / MRE50) protein is Prefoldin subunit beta.